The sequence spans 197 residues: Holliday junction branch migration complex subunit RuvA (197 aa).

The tract at residues 1-61 (MYEYFEGTIT…ENGMTLYGFK (61 aa)) is domain I. A domain II region spans residues 62–140 (SQQDKVLFNK…NYVAENLFTE (79 aa)). The interval 141–150 (DEPVESVFPA) is flexible linker. Residues 150–197 (ALEDALLALGALGYSQKEVDRIKPKLKKLPEMSADEYIKQGLGFLLKK) are domain III.

It belongs to the RuvA family. As to quaternary structure, homotetramer. Forms an RuvA(8)-RuvB(12)-Holliday junction (HJ) complex. HJ DNA is sandwiched between 2 RuvA tetramers; dsDNA enters through RuvA and exits via RuvB. An RuvB hexamer assembles on each DNA strand where it exits the tetramer. Each RuvB hexamer is contacted by two RuvA subunits (via domain III) on 2 adjacent RuvB subunits; this complex drives branch migration. In the full resolvosome a probable DNA-RuvA(4)-RuvB(12)-RuvC(2) complex forms which resolves the HJ.

It localises to the cytoplasm. Functionally, the RuvA-RuvB-RuvC complex processes Holliday junction (HJ) DNA during genetic recombination and DNA repair, while the RuvA-RuvB complex plays an important role in the rescue of blocked DNA replication forks via replication fork reversal (RFR). RuvA specifically binds to HJ cruciform DNA, conferring on it an open structure. The RuvB hexamer acts as an ATP-dependent pump, pulling dsDNA into and through the RuvAB complex. HJ branch migration allows RuvC to scan DNA until it finds its consensus sequence, where it cleaves and resolves the cruciform DNA. This chain is Holliday junction branch migration complex subunit RuvA, found in Lactobacillus delbrueckii subsp. bulgaricus (strain ATCC BAA-365 / Lb-18).